We begin with the raw amino-acid sequence, 210 residues long: SAP domain-containing ribonucleoprotein (210 aa).

Ala2 carries the N-acetylalanine modification. Residues 8-42 (LHKLKLAELKQECLARGLETKGIKQDLINRLQAYL) form the SAP domain. Lys10 is subject to N6-acetyllysine. The span at 45-64 (HAEEEANEEDVLGDETEEEE) shows a compositional bias: acidic residues. The segment at 45–87 (HAEEEANEEDVLGDETEEEEPKPIELPVKEEEPPEKVVDMASE) is disordered. Residues 65–87 (PKPIELPVKEEEPPEKVVDMASE) are compositionally biased toward basic and acidic residues. Lys142 carries the N6-acetyllysine modification. Residues 161 to 210 (VSSISRKSEDDEKLKKRKERFGIVTSSAGTGTTEDTEAKKRKRAERFGIA) are disordered. Ser163 carries the post-translational modification Phosphoserine. The span at 184–193 (VTSSAGTGTT) shows a compositional bias: polar residues.

Belongs to the SAP domain-containing ribonucleoprotein family. As to quaternary structure, interacts with DDX39A. Interacts with FUS. Interacts (via the C-terminal domain) with DDX39B; the interaction is direct and facilitates RNA binding of DDX39B. Component of the transcription/export (TREX) complex at least composed of ALYREF/THOC4, DDX39B, SARNP/CIP29, CHTOP and the THO subcomplex; TREX seems to have dynamic structure involving ATP-dependent remodeling; in the complex interacts directly with DDX39B in a ATP-dependent manner which bridges it to ALYREF/THOC4.

The protein resides in the nucleus. It is found in the nucleus speckle. Its function is as follows. Binds both single-stranded and double-stranded DNA with higher affinity for the single-stranded form. Specifically binds to scaffold/matrix attachment region DNA. Also binds single-stranded RNA. Enhances RNA unwinding activity of DDX39A. May participate in important transcriptional or translational control of cell growth, metabolism and carcinogenesis. Component of the TREX complex which is thought to couple mRNA transcription, processing and nuclear export, and specifically associates with spliced mRNA and not with unspliced pre-mRNA. The TREX complex is recruited to spliced mRNAs by a transcription-independent mechanism, binds to mRNA upstream of the exon-junction complex (EJC) and is recruited in a splicing- and cap-dependent manner to a region near the 5' end of the mRNA where it functions in mRNA export to the cytoplasm via the TAP/NXF1 pathway. Associates with DDX39B, which facilitates RNA binding of DDX39B and likely plays a role in mRNA export. The sequence is that of SAP domain-containing ribonucleoprotein (Sarnp) from Rattus norvegicus (Rat).